Reading from the N-terminus, the 340-residue chain is Short-chain dehydrogenase/reductase prx1 (340 aa).

Residues I60, K84, D104, N131, and K162 each contribute to the NADP(+) site. Catalysis depends on S184, which acts as the Proton donor. The NADP(+) site is built by Y210 and K214. The Proton acceptor role is filled by Y210. Residue K214 is the Lowers pKa of active site Tyr of the active site.

It belongs to the short-chain dehydrogenases/reductases (SDR) family.

It participates in sesquiterpene biosynthesis. In terms of biological role, short-chain dehydrogenase/reductase; part of the gene cluster that mediates the biosynthesis of PR-toxin, a bicyclic sesquiterpene belonging to the eremophilane class and acting as a mycotoxin. The first step of the pathway is catalyzed by the aristolochene synthase which performs the cyclization of trans,trans-farnesyl diphosphate (FPP) to the bicyclic sesquiterpene aristolochene. Following the formation of aristolochene, the non-oxygenated aristolochene is converted to the trioxygenated intermediate eremofortin B, via 7-epi-neopetasone. This conversion appears to involve three enzymes, a hydroxysterol oxidase-like enzyme, the quinone-oxidase prx3 that forms the quinone-type-structure in the bicyclic nucleus of aristolochene with the C8-oxo group and the C-3 hydroxyl group, and the P450 monooxygenase ORF6 that introduces the epoxide at the double bond between carbons 1 and 2. No monoxy or dioxy-intermediates have been reported to be released to the broth, so these three early oxidative reactions may be coupled together. Eremofortin B is further oxidized by another P450 monooxygenase, that introduces a second epoxide between carbons 7 and 11 prior to acetylation to eremofortin A by the acetyltransferase ORF8. The second epoxidation may be performed by a second P450 monooxygenase. After the acetylation step, eremofortin A is converted to eremofortin C and then to PR-toxin. First the conversion of eremofortin A to eremofortin C proceeds by oxidation of the side chain of the molecule at C-12 and is catalyzed by the short-chain oxidoreductase prx1. The cytochrome P450 monooxygenase ORF6 is probably also involved in this step. The primary alcohol formed at C-12 is finally oxidized by the short-chain alcohol dehydrogenase prx4 that forms PR-toxin. In Penicillium roqueforti (strain FM164), this protein is Short-chain dehydrogenase/reductase prx1.